We begin with the raw amino-acid sequence, 283 residues long: MADGHSNNNHVPVLLSFSAFSRPSSVPVGSGYEVLIQKFLSLYGRQIDLHRKFMIQLYSDEWAQYIDLPKGFIISEKCKLRFVPLETDVTILGNLIPATTVFFCCDMQERFRPAIKYFGDIISVGQRLLQGARILGIPVIVSEQYPKGLGNTVQEMDLTGARLVFPKTKFSMVLPEAEAALAELPGVRSVVLFGVETHVCIQQTALDLLARGFEVHMVADSTSSRSMMDRMFALDRMARTGIIVTTSESILLQLVGDKEHPKFKEIQNIIKASAPESGLLSKV.

This sequence belongs to the isochorismatase family.

This Salmo salar (Atlantic salmon) protein is Isochorismatase domain-containing protein 1 (isoc1).